The chain runs to 296 residues: 4-hydroxybenzoate octaprenyltransferase (296 aa).

8 consecutive transmembrane segments (helical) span residues 29–49, 55–75, 102–122, 146–166, 169–189, 219–239, 241–261, and 275–295; these read IGIY…ADGV, LLIF…INDF, AWIT…LTNA, YYPQ…AFTA, GELP…TVAY, LIIG…GNRF, LGLC…WEAW, and FLHN…DYAL.

This sequence belongs to the UbiA prenyltransferase family. Mg(2+) serves as cofactor.

The protein resides in the cell inner membrane. It carries out the reaction all-trans-octaprenyl diphosphate + 4-hydroxybenzoate = 4-hydroxy-3-(all-trans-octaprenyl)benzoate + diphosphate. The protein operates within cofactor biosynthesis; ubiquinone biosynthesis. Catalyzes the prenylation of para-hydroxybenzoate (PHB) with an all-trans polyprenyl group. Mediates the second step in the final reaction sequence of ubiquinone-8 (UQ-8) biosynthesis, which is the condensation of the polyisoprenoid side chain with PHB, generating the first membrane-bound Q intermediate 3-octaprenyl-4-hydroxybenzoate. The chain is 4-hydroxybenzoate octaprenyltransferase from Pseudomonas aeruginosa (strain LESB58).